The following is a 475-amino-acid chain: Aspartyl/glutamyl-tRNA(Asn/Gln) amidotransferase subunit B (475 aa).

It belongs to the GatB/GatE family. GatB subfamily. Heterotrimer of A, B and C subunits.

The enzyme catalyses L-glutamyl-tRNA(Gln) + L-glutamine + ATP + H2O = L-glutaminyl-tRNA(Gln) + L-glutamate + ADP + phosphate + H(+). It carries out the reaction L-aspartyl-tRNA(Asn) + L-glutamine + ATP + H2O = L-asparaginyl-tRNA(Asn) + L-glutamate + ADP + phosphate + 2 H(+). In terms of biological role, allows the formation of correctly charged Asn-tRNA(Asn) or Gln-tRNA(Gln) through the transamidation of misacylated Asp-tRNA(Asn) or Glu-tRNA(Gln) in organisms which lack either or both of asparaginyl-tRNA or glutaminyl-tRNA synthetases. The reaction takes place in the presence of glutamine and ATP through an activated phospho-Asp-tRNA(Asn) or phospho-Glu-tRNA(Gln). The chain is Aspartyl/glutamyl-tRNA(Asn/Gln) amidotransferase subunit B from Bacillus mycoides (strain KBAB4) (Bacillus weihenstephanensis).